Consider the following 238-residue polypeptide: Ribitol-5-phosphate cytidylyltransferase (238 aa).

Residues 7–10 and 81–87 each bind CTP; these read LAGG and GDDRNHT.

Belongs to the IspD/TarI cytidylyltransferase family. TarI subfamily.

It carries out the reaction D-ribitol 5-phosphate + CTP + H(+) = CDP-L-ribitol + diphosphate. It participates in cell wall biogenesis; poly(ribitol phosphate) teichoic acid biosynthesis. In terms of biological role, catalyzes the transfer of the cytidylyl group of CTP to D-ribitol 5-phosphate. The protein is Ribitol-5-phosphate cytidylyltransferase of Staphylococcus epidermidis (strain ATCC 35984 / DSM 28319 / BCRC 17069 / CCUG 31568 / BM 3577 / RP62A).